A 303-amino-acid chain; its full sequence is Sodium/potassium-transporting ATPase subunit beta-1 (303 aa).

Residues 1–34 (MPAATKDSDGGWKKFLWNSEKKEFLGRTGGSWAK) lie on the Cytoplasmic side of the membrane. Residues 35 to 55 (ILLFYVIFYGCLAGIFIGTIQ) form a helical; Signal-anchor for type II membrane protein membrane-spanning segment. The Extracellular segment spans residues 56–303 (ALLLTINDFK…FDVKFTINES (248 aa)). A glycan (N-linked (GlcNAc...) asparagine) is linked at Asn113. Intrachain disulfides connect Cys126/Cys149 and Cys159/Cys175. N-linked (GlcNAc...) asparagine glycosylation is found at Asn194 and Asn264. The cysteines at positions 214 and 275 are disulfide-linked.

This sequence belongs to the X(+)/potassium ATPases subunit beta family. The sodium/potassium-transporting ATPase is composed of a catalytic alpha subunit, an auxiliary non-catalytic beta subunit and an additional regulatory subunit. Detected in all tissues except liver and cardiac muscle. Highest levels found in intestine, ovary and kidney with marginally lower levels in brain, spleen, esophagus, eye and pancreas, intermediate levels in gill and low levels in white and red skeletal muscle.

It localises to the cell membrane. This is the non-catalytic component of the active enzyme, which catalyzes the hydrolysis of ATP coupled with the exchange of Na(+) and K(+) ions across the plasma membrane. The beta subunit regulates, through assembly of alpha/beta heterodimers, the number of sodium pumps transported to the plasma membrane. The protein is Sodium/potassium-transporting ATPase subunit beta-1 (atp1b1) of Anguilla anguilla (European freshwater eel).